The following is a 571-amino-acid chain: EPTPLHDTPPTVFFEVTKPIEVPKTKPCSQLILQHDFAYTYGQAPVFANYTPPSDCPSQTFSTIVLEWKATCRRRQFDRIFGVWLGGVEILRSCTAEPRPNGIVWTVEKDITRYYSLLKSNQTLAVYLGNLIDKTYTGIYHVNISLHFYPAKEKLNSFQQKLDNLASGYHSWADLILPISRNLPLNDGLWFEVQNSNDTELKEFKIPQNAYRAVLEVYVSFHENDEFWYSNLPNEYIAANNLSGTPGNGPFREVVVSLDGEVVGAVWPFTVIFTGGINPLLWRPITAIGSFDLPTYDIEITPFLGKILDGKSHKFGFNVTNALNVWYVDANLHLWLDKQSTKTEGKLSKHSSLPLVVSLVSDFKGLNGTFLTRTSRSVSSTGWVKSSYGNITTRSIQDFYYSNSMVLGKDGNMQIVNQKIIFNDSVYINLPSSYVHSLTSHKTFPLYLYTDFLGQGNGTYLLITNVDLGFIEKKSGLGFSNSSLRNLRSAEGNMVVKNNLVVSGLESTQQIYRYDGGKFCYFRNISSSNYTILYDKVGSKCNKKSLSNLDFVLSRLWPFGARMNFAGLRFT.

N-linked (GlcNAc...) asparagine glycans are attached at residues Asn-121, Asn-143, Asn-197, Asn-241, Asn-318, Asn-367, Asn-390, Asn-423, Asn-457, Asn-481, Asn-524, and Asn-529.

Heterodimer of a large and a small chain. Is highly glycosylated and is largly resistant against self-deglycosylation.

It carries out the reaction Hydrolysis of an N(4)-(acetyl-beta-D-glucosaminyl)asparagine residue in which the glucosamine residue may be further glycosylated, to yield a (substituted) N-acetyl-beta-D-glucosaminylamine and a peptide containing an aspartate residue.. In Prunus dulcis (Almond), this protein is Peptide-N4-(N-acetyl-beta-glucosaminyl)asparagine amidase A.